Here is a 47-residue protein sequence, read N- to C-terminus: Heat shock protein HSP 90 (47 aa).

Belongs to the heat shock protein 90 family. As to quaternary structure, homodimer.

Its subcellular location is the cytoplasm. Its function is as follows. Putative molecular chaperone that may promote the maturation, structural maintenance and proper regulation of specific target proteins. The sequence is that of Heat shock protein HSP 90 from Oryctolagus cuniculus (Rabbit).